A 428-amino-acid polypeptide reads, in one-letter code: Enolase (428 aa).

Position 164 (Q164) interacts with (2R)-2-phosphoglycerate. E206 acts as the Proton donor in catalysis. Mg(2+)-binding residues include D243, E286, and D313. (2R)-2-phosphoglycerate contacts are provided by K338, R367, S368, and K389. K338 serves as the catalytic Proton acceptor.

The protein belongs to the enolase family. Mg(2+) is required as a cofactor.

It localises to the cytoplasm. The protein resides in the secreted. The protein localises to the cell surface. The enzyme catalyses (2R)-2-phosphoglycerate = phosphoenolpyruvate + H2O. It participates in carbohydrate degradation; glycolysis; pyruvate from D-glyceraldehyde 3-phosphate: step 4/5. In terms of biological role, catalyzes the reversible conversion of 2-phosphoglycerate (2-PG) into phosphoenolpyruvate (PEP). It is essential for the degradation of carbohydrates via glycolysis. The protein is Enolase of Dehalococcoides mccartyi (strain ATCC BAA-2100 / JCM 16839 / KCTC 5957 / BAV1).